Reading from the N-terminus, the 239-residue chain is Pyridoxine 5'-phosphate synthase (239 aa).

Asn-7 contacts 3-amino-2-oxopropyl phosphate. 9–10 serves as a coordination point for 1-deoxy-D-xylulose 5-phosphate; the sequence is DH. A 3-amino-2-oxopropyl phosphate-binding site is contributed by Arg-18. His-43 functions as the Proton acceptor in the catalytic mechanism. 2 residues coordinate 1-deoxy-D-xylulose 5-phosphate: Arg-45 and His-50. The active-site Proton acceptor is Glu-70. Residue Thr-100 coordinates 1-deoxy-D-xylulose 5-phosphate. Residue His-191 is the Proton donor of the active site. Residues Gly-192 and 213-214 contribute to the 3-amino-2-oxopropyl phosphate site; that span reads GH.

This sequence belongs to the PNP synthase family. As to quaternary structure, homooctamer; tetramer of dimers.

It localises to the cytoplasm. The enzyme catalyses 3-amino-2-oxopropyl phosphate + 1-deoxy-D-xylulose 5-phosphate = pyridoxine 5'-phosphate + phosphate + 2 H2O + H(+). It participates in cofactor biosynthesis; pyridoxine 5'-phosphate biosynthesis; pyridoxine 5'-phosphate from D-erythrose 4-phosphate: step 5/5. Functionally, catalyzes the complicated ring closure reaction between the two acyclic compounds 1-deoxy-D-xylulose-5-phosphate (DXP) and 3-amino-2-oxopropyl phosphate (1-amino-acetone-3-phosphate or AAP) to form pyridoxine 5'-phosphate (PNP) and inorganic phosphate. This is Pyridoxine 5'-phosphate synthase from Geobacter metallireducens (strain ATCC 53774 / DSM 7210 / GS-15).